The primary structure comprises 264 residues: MSSNIFGSVPILVVVAIQLLLVHNVSSQNVTNDYLNHQCNNTQGRYTHGSTFEKNLNQVLHNISNLDLRYGYAYVSNVVAYKVSKDPNIVFVLLQCRGDSFGSKCHSCLSTAVSGLRERCPGNRGATIWYDQCLLEISSVDSEGRIHYKRMFYMQNPTNVTNDPKRFEDKRRDLLHKLMLEATKDSKENGAKGLLYAVGEMRIGRNKMYAMVQCTQDLWQTGCHVCLEWITQMKYGEFFYRKPGGRVCGRSCSFRYELYPFLRR.

Positions 1–27 are cleaved as a signal peptide; it reads MSSNIFGSVPILVVVAIQLLLVHNVSS. 2 consecutive Gnk2-homologous domains span residues 34–142 and 148–261; these read YLNH…SVDS and YKRM…LYPF.

The protein belongs to the cysteine-rich repeat secretory protein family.

It is found in the secreted. The chain is Cysteine-rich repeat secretory protein 26 (CRRSP26) from Arabidopsis thaliana (Mouse-ear cress).